A 198-amino-acid chain; its full sequence is Pyridoxal 5'-phosphate synthase subunit PdxT (198 aa).

52 to 54 (GES) lines the L-glutamine pocket. The Nucleophile role is filled by Cys-84. Residues Arg-115 and 143–144 (IR) contribute to the L-glutamine site. Active-site charge relay system residues include His-179 and Glu-181.

It belongs to the glutaminase PdxT/SNO family. In terms of assembly, in the presence of PdxS, forms a dodecamer of heterodimers. Only shows activity in the heterodimer.

It catalyses the reaction aldehydo-D-ribose 5-phosphate + D-glyceraldehyde 3-phosphate + L-glutamine = pyridoxal 5'-phosphate + L-glutamate + phosphate + 3 H2O + H(+). The catalysed reaction is L-glutamine + H2O = L-glutamate + NH4(+). It functions in the pathway cofactor biosynthesis; pyridoxal 5'-phosphate biosynthesis. Functionally, catalyzes the hydrolysis of glutamine to glutamate and ammonia as part of the biosynthesis of pyridoxal 5'-phosphate. The resulting ammonia molecule is channeled to the active site of PdxS. The polypeptide is Pyridoxal 5'-phosphate synthase subunit PdxT (Methanococcoides burtonii (strain DSM 6242 / NBRC 107633 / OCM 468 / ACE-M)).